The sequence spans 270 residues: Homeobox protein pal-1 (270 aa).

Disordered stretches follow at residues 1–24 (MSVD…TTVP), 96–130 (VKPP…SGAA), and 175–201 (LGNN…TNNV). 2 stretches are compositionally biased toward low complexity: residues 14 to 24 (SSSTPSPTTVP) and 101 to 130 (SNGS…SGAA). Residues 206–265 (ADKYRMVYSDYQRLELEKEFHTSPFITSDRKSQLSTMLSLTERQIKIWFQNRRAKDRRDK) constitute a DNA-binding region (homeobox).

This sequence belongs to the Caudal homeobox family. Interacts with tir-1 and let-756. In terms of tissue distribution, blastomeres. Embryo. Oocytes.

The protein resides in the nucleus. The protein localises to the chromosome. Its subcellular location is the centromere. It is found in the kinetochore. In terms of biological role, transcriptional activator. Interacts with promoter regions for tbx-8.9, tbx-9, elt-1, hnd-1, scrt-1, and vab-7 genes. Binds the sequence ATTTATGAC. Binds to the enhancer region of the hlh-1 gene promoter during embryonic body wall muscle development. Activates the gene for mab-5 in embryo development. Necessary for vab-7 expression in C blastomeres in the posterior of embryos. Required for posterior V6 neuroectoblast cell fate specification during postembryonic neurogenesis (patterning) which generates the characteristic ray lineage during male tail development. Binds to ced-3 promoter and activated expression which is crucial for tail-spike cell death. Has a role in E cell specification in endoderm development and body wall muscle development. This Caenorhabditis elegans protein is Homeobox protein pal-1 (pal-1).